The chain runs to 427 residues: Peptidase B (427 aa).

Positions 195 and 200 each coordinate Mn(2+). Lys207 is an active-site residue. The Mn(2+) site is built by Asp218, Asp277, and Glu279. Arg281 is a catalytic residue.

It belongs to the peptidase M17 family. Homohexamer. Mn(2+) is required as a cofactor.

Its subcellular location is the cytoplasm. The catalysed reaction is Release of an N-terminal amino acid, Xaa, from a peptide or arylamide. Xaa is preferably Glu or Asp but may be other amino acids, including Leu, Met, His, Cys and Gln.. Functionally, probably plays an important role in intracellular peptide degradation. The sequence is that of Peptidase B from Escherichia coli (strain ATCC 8739 / DSM 1576 / NBRC 3972 / NCIMB 8545 / WDCM 00012 / Crooks).